The primary structure comprises 599 residues: Elongation factor 4 (599 aa).

One can recognise a tr-type G domain in the interval 5–187 (SHIRNFSIIA…RLVHTIPAPV (183 aa)). Residues 17-22 (DHGKST) and 134-137 (NKMD) contribute to the GTP site.

The protein belongs to the TRAFAC class translation factor GTPase superfamily. Classic translation factor GTPase family. LepA subfamily.

It localises to the cell inner membrane. It catalyses the reaction GTP + H2O = GDP + phosphate + H(+). Required for accurate and efficient protein synthesis under certain stress conditions. May act as a fidelity factor of the translation reaction, by catalyzing a one-codon backward translocation of tRNAs on improperly translocated ribosomes. Back-translocation proceeds from a post-translocation (POST) complex to a pre-translocation (PRE) complex, thus giving elongation factor G a second chance to translocate the tRNAs correctly. Binds to ribosomes in a GTP-dependent manner. In Pseudomonas putida (strain W619), this protein is Elongation factor 4.